A 348-amino-acid polypeptide reads, in one-letter code: Anthranilate phosphoribosyltransferase (348 aa).

Residues G91, 94-95 (GD), T99, 101-104 (NIST), 119-127 (KHGNRSASG), and S131 contribute to the 5-phospho-alpha-D-ribose 1-diphosphate site. G91 contacts anthranilate. Residue S103 coordinates Mg(2+). N122 contacts anthranilate. Residue R177 coordinates anthranilate. The Mg(2+) site is built by D236 and E237.

It belongs to the anthranilate phosphoribosyltransferase family. As to quaternary structure, homodimer. Mg(2+) is required as a cofactor.

It catalyses the reaction N-(5-phospho-beta-D-ribosyl)anthranilate + diphosphate = 5-phospho-alpha-D-ribose 1-diphosphate + anthranilate. It participates in amino-acid biosynthesis; L-tryptophan biosynthesis; L-tryptophan from chorismate: step 2/5. Catalyzes the transfer of the phosphoribosyl group of 5-phosphorylribose-1-pyrophosphate (PRPP) to anthranilate to yield N-(5'-phosphoribosyl)-anthranilate (PRA). The chain is Anthranilate phosphoribosyltransferase from Synechococcus sp. (strain ATCC 27144 / PCC 6301 / SAUG 1402/1) (Anacystis nidulans).